Here is a 455-residue protein sequence, read N- to C-terminus: MFS-type transporter SLC18B1 (455 aa).

M1 carries the post-translational modification N-acetylmethionine. The interval 1-26 (MDTAGPPAPAGTEGDGPGGSTGETSR) is disordered. Over 1-32 (MDTAGPPAPAGTEGDGPGGSTGETSRRLSKEQ) the chain is Cytoplasmic. Phosphoserine is present on S20. The helical transmembrane segment at 33 to 53 (IFVLVSAASMNLGCMMTYSIL) threads the bilayer. Residues 54–69 (GPFFPKEAEKKGASNT) are Extracellular-facing. A helical membrane pass occupies residues 70–90 (TIGMIFGCYALFELLASLVFG). Residues 91–99 (KYLVHIGAK) lie on the Cytoplasmic side of the membrane. Residues 100–120 (FMFIAGMFVSGGVTILFGVLD) traverse the membrane as a helical segment. Residues 121 to 126 (QLPEGP) lie on the Extracellular side of the membrane. Residues 127-147 (IFIAMCFLVRIVDAIGFGAAI) form a helical membrane-spanning segment. At 148 to 166 (TASSSILAKAFPNNVATVM) the chain is on the cytoplasmic side. Residues 167-187 (GSLEVFSGLGLVAGPPLGGLL) traverse the membrane as a helical segment. The Extracellular segment spans residues 188-194 (YQSFGYE). Residues 195–215 (VPFIFLGCIVLLMIPLNLCIL) form a helical membrane-spanning segment. The Cytoplasmic portion of the chain corresponds to 216-232 (PSYESDAGKQSFWKLVT). A helical membrane pass occupies residues 233-253 (LPKIGLIAFVIISLSSCFGFL). Residues 254 to 271 (DPTLSLFVMKKFSLSTGY) are Extracellular-facing. The helical transmembrane segment at 272–292 (VGLVFLGLSLSYAISSPLFGL) threads the bilayer. Topologically, residues 293–303 (LSDKMPNLRKW) are cytoplasmic. The helical transmembrane segment at 304–324 (FLVFGNLITAGCYMLLGPIPL) threads the bilayer. Residues 325 to 330 (LHIKSQ) are Extracellular-facing. The helical transmembrane segment at 331–351 (LWLLVLVLVINGVSAGMSIIP) threads the bilayer. Over 352–376 (TFPEMLSCAYANGFEDGISTLGLVS) the chain is Cytoplasmic. Residues 377–397 (GLFGAMWSVGAFMGPILGGFL) traverse the membrane as a helical segment. At 398–406 (CEKIGFEWA) the chain is on the extracellular side. The helical transmembrane segment at 407–427 (AAIQGLWTLLSGVAMALFYLW) threads the bilayer. The Cytoplasmic portion of the chain corresponds to 428–455 (EDSTMRRSKAQNILGTEEEQAALLPNDT).

Expressed in brain structures, particularly in hippocampus, cortex, and cerebellum (at protein level). Expressed in astrocytes and hippocampal neurons (at protein level). Expressed in peritoneal mast cells.

It localises to the cytoplasmic vesicle. The protein resides in the secretory vesicle membrane. Its subcellular location is the secretory vesicle. The protein localises to the synaptic vesicle membrane. It catalyses the reaction spermine(in) + n H(+)(out) = spermine(out) + n H(+)(in). The enzyme catalyses spermidine(in) + n H(+)(out) = spermidine(out) + n H(+)(in). It carries out the reaction serotonin(in) + n H(+)(out) = serotonin(out) + n H(+)(in). Its function is as follows. Proton-coupled polyamine antiporter involved in the translocation of polyamines from cytosol into secretory vesicles prior to their release via exocytosis. Uses the electrochemical proton gradient generated by a V-type proton-pumping ATPase to couple the efflux of protons with the uptake of a polyamine molecule. Facilitates vesicular storage of spermine and spermidine in astrocytes with an impact on glutamatergic neuronal transmission and memory formation. Upon antigen stimulation, regulates polyamine accumulation and release in mast cell secretory granules, which in turn potentiates mast cell degranulation and histamine secretion. The sequence is that of MFS-type transporter SLC18B1 from Rattus norvegicus (Rat).